A 60-amino-acid chain; its full sequence is Cytochrome c oxidase subunit 9, mitochondrial (60 aa).

The Mitochondrial matrix portion of the chain corresponds to 1–15; that stretch reads MSAIAPITGTIRKRI. The helical transmembrane segment at 16–38 threads the bilayer; sequence LADITIGFAIGGAMASYWWWGFH. At 39–57 the chain is on the mitochondrial intermembrane side; the sequence is KNIINKREAYYAKLAEQKA. Positions 58–60 are cleaved as a propeptide — removed in mature form; the sequence is AEN.

This sequence belongs to the fungal cytochrome c oxidase subunit 7a family. In terms of assembly, component of the cytochrome c oxidase (complex IV, CIV), a multisubunit enzyme composed of a catalytic core of 3 subunits and several supernumerary subunits. The complex exists as a monomer or a dimer and forms supercomplexes (SCs) in the inner mitochondrial membrane with ubiquinol-cytochrome c oxidoreductase (cytochrome b-c1 complex, complex III, CIII).

It localises to the mitochondrion inner membrane. It functions in the pathway energy metabolism; oxidative phosphorylation. In terms of biological role, component of the cytochrome c oxidase, the last enzyme in the mitochondrial electron transport chain which drives oxidative phosphorylation. The respiratory chain contains 3 multisubunit complexes succinate dehydrogenase (complex II, CII), ubiquinol-cytochrome c oxidoreductase (cytochrome b-c1 complex, complex III, CIII) and cytochrome c oxidase (complex IV, CIV), that cooperate to transfer electrons derived from NADH and succinate to molecular oxygen, creating an electrochemical gradient over the inner membrane that drives transmembrane transport and the ATP synthase. Cytochrome c oxidase is the component of the respiratory chain that catalyzes the reduction of oxygen to water. Electrons originating from reduced cytochrome c in the intermembrane space (IMS) are transferred via the dinuclear copper A center (CU(A)) of subunit 2 and heme A of subunit 1 to the active site in subunit 1, a binuclear center (BNC) formed by heme A3 and copper B (CU(B)). The BNC reduces molecular oxygen to 2 water molecules using 4 electrons from cytochrome c in the IMS and 4 protons from the mitochondrial matrix. This is Cytochrome c oxidase subunit 9, mitochondrial (COX9) from Kluyveromyces lactis (strain ATCC 8585 / CBS 2359 / DSM 70799 / NBRC 1267 / NRRL Y-1140 / WM37) (Yeast).